Reading from the N-terminus, the 572-residue chain is Terminal nucleotidyltransferase 4B (572 aa).

The segment at 1–105 (MYRSGERLLG…ADGGGVVYSG (105 aa)) is disordered. Residues 25–34 (ETTNNNNNHH) show a composition bias toward polar residues. Residues 36 to 76 (PGAWARRAGSSASSPPSASSSPHPSAAVPAADPADSASGSS) show a composition bias toward low complexity. Positions 89 to 102 (RAAGGGRADGGGVV) are enriched in gly residues. A Glycyl lysine isopeptide (Lys-Gly) (interchain with G-Cter in SUMO2) cross-link involves residue Val151. Mg(2+) is bound by residues Asp177 and Asp179. Positions 240, 265, 283, 284, 368, and 372 each coordinate ATP. The PAP-associated domain occupies 308 to 368 (NYGVLLIEFF…YIEDPLQPGN (61 aa)). Residues 435–572 (KNRPEPSCNG…RDAPLSDLCR (138 aa)) are disordered. The segment covering 446 to 464 (VSSSSATQSSSSDVDSDAT) has biased composition (low complexity). Lys470 is covalently cross-linked (Glycyl lysine isopeptide (Lys-Gly) (interchain with G-Cter in SUMO2)). A compositionally biased stretch (polar residues) spans 477 to 494 (STGNRVGSQDVSLESSQA). Ser484 carries the post-translational modification Phosphoserine. Glycyl lysine isopeptide (Lys-Gly) (interchain with G-Cter in SUMO2) cross-links involve residues Lys497, Lys512, and Lys526. The segment covering 499-514 (QSTQTTNTSNSTNKSQ) has biased composition (low complexity). Polar residues predominate over residues 522-553 (RSSSKGFQGTTQTSHGSLMTNKQHQGKSNNQY). Residues 557-563 (KKRKHKR) carry the Basic, involved in binding of the RNA primer motif.

Belongs to the DNA polymerase type-B-like family. Component of a nucleolar TRAMP-like complex, an ATP-dependent exosome regulatory complex consisting of a helicase (MTREX), an oligadenylate polymerase (TENT4B or TENT4A), and a substrate specific RNA-binding factor (ZCCHC7 or ZCCHC8). Several TRAMP-like complexes exist with specific compositions and are associated with nuclear, or nucleolar RNA exosomes. Interacts with CPEB1; the interaction is required for TENT4B-mediated translational control. Mg(2+) is required as a cofactor. It depends on Mn(2+) as a cofactor.

It is found in the nucleus. The protein resides in the nucleolus. It localises to the cytoplasm. The catalysed reaction is RNA(n) + ATP = RNA(n)-3'-adenine ribonucleotide + diphosphate. Its function is as follows. Terminal nucleotidyltransferase that catalyzes preferentially the transfer of ATP and GTP on RNA 3' poly(A) tail creating a heterogeneous 3' poly(A) tail leading to mRNAs stabilization by protecting mRNAs from active deadenylation. Also functions as a catalytic subunit of a TRAMP-like complex which has a poly(A) RNA polymerase activity and is involved in a post-transcriptional quality control mechanism. Polyadenylation with short oligo(A) tails is required for the degradative activity of the exosome on several of its nuclear RNA substrates. Doesn't need a cofactor for polyadenylation activity (in vitro). Required for cytoplasmic polyadenylation of mRNAs involved in carbohydrate metabolism, including the glucose transporter SLC2A1/GLUT1. Plays a role in replication-dependent histone mRNA degradation, probably through terminal uridylation of mature histone mRNAs. May play a role in sister chromatid cohesion. Mediates 3' adenylation of the microRNA MIR21 followed by its 3'-to-5' trimming by the exoribonuclease PARN leading to degradation. Mediates 3' adenylation of H/ACA box snoRNAs (small nucleolar RNAs) followed by its 3'-to-5' trimming by the exoribonuclease PARN which enhances snoRNA stability and maturation. This chain is Terminal nucleotidyltransferase 4B, found in Homo sapiens (Human).